Consider the following 279-residue polypeptide: Large ribosomal subunit protein uL2 (279 aa).

The tract at residues 218 to 279 (RPQTRGSAMN…ITRRKSNPKR (62 aa)) is disordered. Over residues 255-279 (KGSKTRRKKASDKLIITRRKSNPKR) the composition is skewed to basic residues.

This sequence belongs to the universal ribosomal protein uL2 family. Part of the 50S ribosomal subunit. Forms a bridge to the 30S subunit in the 70S ribosome.

One of the primary rRNA binding proteins. Required for association of the 30S and 50S subunits to form the 70S ribosome, for tRNA binding and peptide bond formation. It has been suggested to have peptidyltransferase activity; this is somewhat controversial. Makes several contacts with the 16S rRNA in the 70S ribosome. The chain is Large ribosomal subunit protein uL2 from Sulfurimonas denitrificans (strain ATCC 33889 / DSM 1251) (Thiomicrospira denitrificans (strain ATCC 33889 / DSM 1251)).